Consider the following 154-residue polypeptide: Myoglobin (154 aa).

Residues 2-148 (GLSDGEWQSV…FRNDIAAKYK (147 aa)) enclose the Globin domain. Ser-4 is modified (phosphoserine). A nitrite-binding site is contributed by His-65. Position 65 (His-65) interacts with O2. The residue at position 68 (Thr-68) is a Phosphothreonine. His-94 is a heme b binding site.

The protein belongs to the globin family. As to quaternary structure, monomeric.

It localises to the cytoplasm. It is found in the sarcoplasm. It catalyses the reaction Fe(III)-heme b-[protein] + nitric oxide + H2O = Fe(II)-heme b-[protein] + nitrite + 2 H(+). The enzyme catalyses H2O2 + AH2 = A + 2 H2O. In terms of biological role, monomeric heme protein which primary function is to store oxygen and facilitate its diffusion within muscle tissues. Reversibly binds oxygen through a pentacoordinated heme iron and enables its timely and efficient release as needed during periods of heightened demand. Depending on the oxidative conditions of tissues and cells, and in addition to its ability to bind oxygen, it also has a nitrite reductase activity whereby it regulates the production of bioactive nitric oxide. Under stress conditions, like hypoxia and anoxia, it also protects cells against reactive oxygen species thanks to its pseudoperoxidase activity. This is Myoglobin (MB) from Nycticebus coucang (Slow loris).